Consider the following 354-residue polypeptide: UDP-N-acetylglucosamine--N-acetylmuramyl-(pentapeptide) pyrophosphoryl-undecaprenol N-acetylglucosamine transferase (354 aa).

UDP-N-acetyl-alpha-D-glucosamine is bound by residues 14-16 (TGG), Asn126, Arg162, Ser190, Ile243, 262-267 (ALTVSE), and Gln287.

This sequence belongs to the glycosyltransferase 28 family. MurG subfamily.

It localises to the cell inner membrane. The enzyme catalyses di-trans,octa-cis-undecaprenyl diphospho-N-acetyl-alpha-D-muramoyl-L-alanyl-D-glutamyl-meso-2,6-diaminopimeloyl-D-alanyl-D-alanine + UDP-N-acetyl-alpha-D-glucosamine = di-trans,octa-cis-undecaprenyl diphospho-[N-acetyl-alpha-D-glucosaminyl-(1-&gt;4)]-N-acetyl-alpha-D-muramoyl-L-alanyl-D-glutamyl-meso-2,6-diaminopimeloyl-D-alanyl-D-alanine + UDP + H(+). Its pathway is cell wall biogenesis; peptidoglycan biosynthesis. In terms of biological role, cell wall formation. Catalyzes the transfer of a GlcNAc subunit on undecaprenyl-pyrophosphoryl-MurNAc-pentapeptide (lipid intermediate I) to form undecaprenyl-pyrophosphoryl-MurNAc-(pentapeptide)GlcNAc (lipid intermediate II). The protein is UDP-N-acetylglucosamine--N-acetylmuramyl-(pentapeptide) pyrophosphoryl-undecaprenol N-acetylglucosamine transferase of Photobacterium profundum (strain SS9).